A 198-amino-acid chain; its full sequence is Small ribosomal subunit protein uS7 (198 aa).

It belongs to the universal ribosomal protein uS7 family. Part of the 30S ribosomal subunit.

Its function is as follows. One of the primary rRNA binding proteins, it binds directly to 16S rRNA where it nucleates assembly of the head domain of the 30S subunit. Is located at the subunit interface close to the decoding center. This Desulfurococcus mucosus (Desulfurococcus mobilis) protein is Small ribosomal subunit protein uS7.